A 187-amino-acid chain; its full sequence is Probable RNA 2'-phosphotransferase (187 aa).

Belongs to the KptA/TPT1 family.

Functionally, removes the 2'-phosphate from RNA via an intermediate in which the phosphate is ADP-ribosylated by NAD followed by a presumed transesterification to release the RNA and generate ADP-ribose 1''-2''-cyclic phosphate (APPR&gt;P). May function as an ADP-ribosylase. The chain is Probable RNA 2'-phosphotransferase from Pseudomonas syringae pv. tomato (strain ATCC BAA-871 / DC3000).